A 154-amino-acid polypeptide reads, in one-letter code: MSEQCPCGSTLEYQRCCEPYIMGTEIAAKPSILMRSRYSAYVKKNVDYLIATWHPDCNAEQWRDGIIQSFSNTTWQGLTVIAEMAGDHDNEAFVEFIARFKDANSTQVSAMHERSRFLRIKEHWYYIDGIRPSVGRNDTCPCGSGKKYKKCCGR.

Belongs to the UPF0225 family.

The polypeptide is UPF0225 protein YE2246 (Yersinia enterocolitica serotype O:8 / biotype 1B (strain NCTC 13174 / 8081)).